We begin with the raw amino-acid sequence, 1400 residues long: DNA-directed RNA polymerase subunit beta' (1400 aa).

The Zn(2+) site is built by cysteine 70, cysteine 72, cysteine 85, and cysteine 88. Positions 460, 462, and 464 each coordinate Mg(2+). Residues cysteine 814, cysteine 888, cysteine 895, and cysteine 898 each contribute to the Zn(2+) site. The interval 1367 to 1400 (DRQAKRAEAQEGPSAEQATDNLAALLNAGFSSDE) is disordered.

Belongs to the RNA polymerase beta' chain family. As to quaternary structure, the RNAP catalytic core consists of 2 alpha, 1 beta, 1 beta' and 1 omega subunit. When a sigma factor is associated with the core the holoenzyme is formed, which can initiate transcription. Mg(2+) serves as cofactor. The cofactor is Zn(2+).

The enzyme catalyses RNA(n) + a ribonucleoside 5'-triphosphate = RNA(n+1) + diphosphate. Its function is as follows. DNA-dependent RNA polymerase catalyzes the transcription of DNA into RNA using the four ribonucleoside triphosphates as substrates. The protein is DNA-directed RNA polymerase subunit beta' of Vibrio campbellii (strain ATCC BAA-1116).